The following is a 755-amino-acid chain: uncharacterized protein (755 aa).

Disordered regions lie at residues 1-44 (MAAP…AAAQ), 72-91 (AEHSFSTLPPETGSVGATAQ), 99-174 (FSLS…IPHY), 393-467 (TTNV…SSSR), 523-545 (LPKTTGDTDPSGQATGGVTEGGG), 584-672 (VSSS…LPSG), and 734-755 (QAATAGSQPSSRRSSPTSPRRK). Composition is skewed to low complexity over residues 10 to 25 (TTTQITQTGQTTTTTT) and 35 to 44 (TTTGSGAAAQ). Composition is skewed to low complexity over residues 112-130 (ISSSSDGSSISRTSSNASS), 139-151 (SPDLGDLDSLSGS), and 393-412 (TTNVTTEEGGGTNITSTKST). Over residues 429–446 (IEEDTIQFDDPGQGEDDN) the composition is skewed to acidic residues. Positions 452 to 462 (NTPPPPGPPPN) are enriched in pro residues. Over residues 536–545 (ATGGVTEGGG) the composition is skewed to gly residues. Over residues 590–599 (LPQPQVATTI) the composition is skewed to polar residues. Composition is skewed to low complexity over residues 600–666 (TPQA…QTPQ) and 740–755 (SQPSSRRSSPTSPRRK).

It belongs to the chlamydial CPn_0572/CT_456/TC_0741 family.

This is an uncharacterized protein from Chlamydia pneumoniae (Chlamydophila pneumoniae).